Reading from the N-terminus, the 256-residue chain is Thiazole synthase (256 aa).

Lysine 95 functions as the Schiff-base intermediate with DXP in the catalytic mechanism. Residues glycine 156, 182 to 183 (AG), and 204 to 205 (NT) contribute to the 1-deoxy-D-xylulose 5-phosphate site.

The protein belongs to the ThiG family. In terms of assembly, homotetramer. Forms heterodimers with either ThiH or ThiS.

Its subcellular location is the cytoplasm. The catalysed reaction is [ThiS sulfur-carrier protein]-C-terminal-Gly-aminoethanethioate + 2-iminoacetate + 1-deoxy-D-xylulose 5-phosphate = [ThiS sulfur-carrier protein]-C-terminal Gly-Gly + 2-[(2R,5Z)-2-carboxy-4-methylthiazol-5(2H)-ylidene]ethyl phosphate + 2 H2O + H(+). It functions in the pathway cofactor biosynthesis; thiamine diphosphate biosynthesis. In terms of biological role, catalyzes the rearrangement of 1-deoxy-D-xylulose 5-phosphate (DXP) to produce the thiazole phosphate moiety of thiamine. Sulfur is provided by the thiocarboxylate moiety of the carrier protein ThiS. In vitro, sulfur can be provided by H(2)S. The polypeptide is Thiazole synthase (Citrobacter koseri (strain ATCC BAA-895 / CDC 4225-83 / SGSC4696)).